Here is a 113-residue protein sequence, read N- to C-terminus: U11-theraphotoxin-Hhn1p (113 aa).

The signal sequence occupies residues 1 to 21; the sequence is MNTVRVTFLLVFVLAVSLGQA. Residues 22–74 constitute a propeptide that is removed on maturation; sequence DKDENRMEMQEKTEQGKSYLDFAENLLLQKLEELEAKLLEEDSEESRNSRQKR. The interval 61–83 is disordered; the sequence is EEDSEESRNSRQKRCIGEGVPCD. Disulfide bonds link cysteine 75–cysteine 90, cysteine 82–cysteine 95, and cysteine 89–cysteine 110.

The protein belongs to the neurotoxin 14 (magi-1) family. 01 (HNTX-16) subfamily. As to expression, expressed by the venom gland.

The protein localises to the secreted. In terms of biological role, probable ion channel inhibitor. The chain is U11-theraphotoxin-Hhn1p from Cyriopagopus hainanus (Chinese bird spider).